The chain runs to 474 residues: L-arabinose isomerase (474 aa).

Residues glutamate 306, glutamate 331, histidine 348, and histidine 447 each coordinate Mn(2+).

This sequence belongs to the arabinose isomerase family. The cofactor is Mn(2+).

The catalysed reaction is beta-L-arabinopyranose = L-ribulose. Its pathway is carbohydrate degradation; L-arabinose degradation via L-ribulose; D-xylulose 5-phosphate from L-arabinose (bacterial route): step 1/3. In terms of biological role, catalyzes the conversion of L-arabinose to L-ribulose. This Oceanobacillus iheyensis (strain DSM 14371 / CIP 107618 / JCM 11309 / KCTC 3954 / HTE831) protein is L-arabinose isomerase.